We begin with the raw amino-acid sequence, 634 residues long: Ankyrin repeat protein OPG025 (634 aa).

ANK repeat units lie at residues 36–69, 70–100, 103–134, 175–211, 307–337, and 412–441; these read DGET…YKNI, NDFD…EINS, NGIN…PTCS, MGKT…EMRY, IQDL…TLYR, and HGCS…DINI.

The protein belongs to the orthopoxvirus OPG025 family. Interacts with components of host SCF complex CUL1 and SKP1 and components of the cullin deneddylation/COP9 signalosome complex subunits COPS7A and COPS7B.

Plays a role in the inhibition of host immune repsonse by counteracting the action of interferons on early events in the viral replication cycle. The chain is Ankyrin repeat protein OPG025 (OPG025) from Vaccinia virus (strain Copenhagen) (VACV).